We begin with the raw amino-acid sequence, 127 residues long: Small ribosomal subunit protein uS11 (127 aa).

It belongs to the universal ribosomal protein uS11 family. As to quaternary structure, part of the 30S ribosomal subunit. Interacts with proteins S7 and S18. Binds to IF-3.

In terms of biological role, located on the platform of the 30S subunit, it bridges several disparate RNA helices of the 16S rRNA. Forms part of the Shine-Dalgarno cleft in the 70S ribosome. This chain is Small ribosomal subunit protein uS11, found in Anaeromyxobacter sp. (strain Fw109-5).